The primary structure comprises 96 residues: UPF0235 protein ECA3630 (96 aa).

Belongs to the UPF0235 family.

This is UPF0235 protein ECA3630 from Pectobacterium atrosepticum (strain SCRI 1043 / ATCC BAA-672) (Erwinia carotovora subsp. atroseptica).